Consider the following 295-residue polypeptide: Bifunctional protein FolD (295 aa).

NADP(+) is bound by residues 169-171, Ser-194, and Ile-235; that span reads GRS.

This sequence belongs to the tetrahydrofolate dehydrogenase/cyclohydrolase family. As to quaternary structure, homodimer.

It catalyses the reaction (6R)-5,10-methylene-5,6,7,8-tetrahydrofolate + NADP(+) = (6R)-5,10-methenyltetrahydrofolate + NADPH. The enzyme catalyses (6R)-5,10-methenyltetrahydrofolate + H2O = (6R)-10-formyltetrahydrofolate + H(+). It functions in the pathway one-carbon metabolism; tetrahydrofolate interconversion. Its function is as follows. Catalyzes the oxidation of 5,10-methylenetetrahydrofolate to 5,10-methenyltetrahydrofolate and then the hydrolysis of 5,10-methenyltetrahydrofolate to 10-formyltetrahydrofolate. The polypeptide is Bifunctional protein FolD (Acaryochloris marina (strain MBIC 11017)).